The chain runs to 881 residues: Valine--tRNA ligase (881 aa).

Positions 49-59 (PNVTGKLHLGH) match the 'HIGH' region motif. A 'KMSKS' region motif is present at residues 526 to 530 (KMSKS). Residue Lys529 participates in ATP binding. The stretch at 810 to 881 (LADLINLDEE…VRQRLADLEK (72 aa)) forms a coiled coil.

This sequence belongs to the class-I aminoacyl-tRNA synthetase family. ValS type 1 subfamily. Monomer.

Its subcellular location is the cytoplasm. It carries out the reaction tRNA(Val) + L-valine + ATP = L-valyl-tRNA(Val) + AMP + diphosphate. Its function is as follows. Catalyzes the attachment of valine to tRNA(Val). As ValRS can inadvertently accommodate and process structurally similar amino acids such as threonine, to avoid such errors, it has a 'posttransfer' editing activity that hydrolyzes mischarged Thr-tRNA(Val) in a tRNA-dependent manner. The protein is Valine--tRNA ligase of Bacillus cereus (strain ATCC 14579 / DSM 31 / CCUG 7414 / JCM 2152 / NBRC 15305 / NCIMB 9373 / NCTC 2599 / NRRL B-3711).